Consider the following 435-residue polypeptide: ATP-dependent protease ATPase subunit HslU (435 aa).

ATP-binding positions include Ile-18, 60 to 65 (GVGKTE), Asp-248, Glu-313, and Arg-385.

It belongs to the ClpX chaperone family. HslU subfamily. In terms of assembly, a double ring-shaped homohexamer of HslV is capped on each side by a ring-shaped HslU homohexamer. The assembly of the HslU/HslV complex is dependent on binding of ATP.

The protein localises to the cytoplasm. In terms of biological role, ATPase subunit of a proteasome-like degradation complex; this subunit has chaperone activity. The binding of ATP and its subsequent hydrolysis by HslU are essential for unfolding of protein substrates subsequently hydrolyzed by HslV. HslU recognizes the N-terminal part of its protein substrates and unfolds these before they are guided to HslV for hydrolysis. This Roseobacter denitrificans (strain ATCC 33942 / OCh 114) (Erythrobacter sp. (strain OCh 114)) protein is ATP-dependent protease ATPase subunit HslU.